A 246-amino-acid chain; its full sequence is Biosynthetic peptidoglycan transglycosylase (246 aa).

The chain crosses the membrane as a helical span at residues 20–42 (WLRWLMAAPLLFAAASVLQVLIL).

Belongs to the glycosyltransferase 51 family.

The protein localises to the cell inner membrane. It catalyses the reaction [GlcNAc-(1-&gt;4)-Mur2Ac(oyl-L-Ala-gamma-D-Glu-L-Lys-D-Ala-D-Ala)](n)-di-trans,octa-cis-undecaprenyl diphosphate + beta-D-GlcNAc-(1-&gt;4)-Mur2Ac(oyl-L-Ala-gamma-D-Glu-L-Lys-D-Ala-D-Ala)-di-trans,octa-cis-undecaprenyl diphosphate = [GlcNAc-(1-&gt;4)-Mur2Ac(oyl-L-Ala-gamma-D-Glu-L-Lys-D-Ala-D-Ala)](n+1)-di-trans,octa-cis-undecaprenyl diphosphate + di-trans,octa-cis-undecaprenyl diphosphate + H(+). It participates in cell wall biogenesis; peptidoglycan biosynthesis. In terms of biological role, peptidoglycan polymerase that catalyzes glycan chain elongation from lipid-linked precursors. This chain is Biosynthetic peptidoglycan transglycosylase, found in Xanthomonas axonopodis pv. citri (strain 306).